Consider the following 394-residue polypeptide: RNA demethylase ALKBH5 (394 aa).

2 disordered regions span residues 1–26 and 48–83; these read MAAA…YKAG and AEPY…EEAR. Ala-2 bears the N-acetylalanine mark. A Glycyl lysine isopeptide (Lys-Gly) (interchain with G-Cter in ubiquitin) cross-link involves residue Lys-57. Residues 59-83 show a composition bias toward basic and acidic residues; that stretch reads KYPEDSDPERSDFEEQQLQKEEEAR. Ser-64 and Ser-69 each carry phosphoserine. The stretch at 67–116 forms a coiled coil; it reads ERSDFEEQQLQKEEEARKVKSGIRQMRLFSQDECAKIEARIDEVVSRAEK. Lys-86 is covalently cross-linked (Glycyl lysine isopeptide (Lys-Gly) (interchain with G-Cter in SUMO1)). Phosphoserine is present on Ser-87. N6-acetyllysine is present on Lys-132. Tyr-139 is a catalytic residue. The 2-oxoglutarate site is built by Asn-193, Tyr-195, and His-204. Cysteines 230 and 267 form a disulfide. Lys-235 carries the post-translational modification N6-acetyllysine. 2 residues coordinate 2-oxoglutarate: His-266 and Arg-277. A disordered region spans residues 298–394; sequence SSSVLPPSYA…PARKVKMRRH (97 aa). Residue Lys-321 forms a Glycyl lysine isopeptide (Lys-Gly) (interchain with G-Cter in SUMO1) linkage. Ser-325 carries the phosphoserine modification. Lys-328 participates in a covalent cross-link: Glycyl lysine isopeptide (Lys-Gly) (interchain with G-Cter in SUMO2). Positions 328–349 are enriched in basic and acidic residues; it reads KADPDAAHRPRILEMDKEENRR. 2 positions are modified to phosphoserine: Ser-371 and Ser-384.

It belongs to the alkB family. In terms of assembly, monomer. Interacts with RBM33; promoting desumoylation by SENP1 and recruitment to N(6)-methyladenosine-containing mRNAs. Interacts (when acetylated by KAT8) with PSPC1; interaction facilitates recognition of N(6)-methyladenosine (m6A) mRNA. The cofactor is Fe(2+). In terms of processing, phosphorylated at Ser-87 and Ser-325 in response to reactive oxygen species (ROS), promoting sumoylation and inactivation. Acetylated by KAT8 at Lys-235, promoting interaction with PSPC1, thereby facilitating recognition of N(6)-methyladenosine (m6A) mRNA by ALKBH5. Deacetylated at Lys-235 by HDAC7. Post-translationally, sumoylated at Lys-86 and Lys-321 by PIAS4 following phosphorylation at Ser-87 and Ser-325 in response to reactive oxygen species (ROS), inhibiting the RNA demethylase activity. Desumoylated by SENP1; relieving RNA demethylase inhibition, leading to N(6)-methyladenosine-containing mRNAs demethylation. In terms of processing, ubiquitinated at Lys-57 via 'Lys-48'-linked polyubiquitin chain, leading to its degradation by the proteasome. Deubiquitinated at Lys-57 by USP9X, promoting its stabilizazion.

The protein localises to the nucleus speckle. It catalyses the reaction an N(6)-methyladenosine in mRNA + 2-oxoglutarate + O2 = an adenosine in mRNA + formaldehyde + succinate + CO2. Its activity is regulated as follows. RNA demethylase activity is inhibited following sumoylation. Inhibition is relieved following desumoylation. Functionally, dioxygenase that specifically demethylates N(6)-methyladenosine (m6A) RNA, the most prevalent internal modification of messenger RNA (mRNA) in higher eukaryotes. Demethylates RNA by oxidative demethylation, which requires molecular oxygen, alpha-ketoglutarate and iron. Demethylation of m6A mRNA affects mRNA processing, translation and export. Can also demethylate N(6)-methyladenosine in single-stranded DNA (in vitro). Required for the late meiotic and haploid phases of spermatogenesis by mediating m6A demethylation in spermatocytes and round spermatids: m6A demethylation of target transcripts is required for correct splicing and the production of longer 3'-UTR mRNAs in male germ cells. Involved in paraspeckle assembly, a nuclear membraneless organelle, by undergoing liquid-liquid phase separation. Paraspeckle assembly is coupled with m6A demethylation of RNAs, such as NEAT1 non-coding RNA. Also acts as a negative regulator of T-cell development: inhibits gamma-delta T-cell proliferation via demethylation of JAG1 and NOTCH2 transcripts. Inhibits regulatory T-cell (Treg) recruitment by mediating demethylation and destabilization of CCL28 mRNAs. In Bos taurus (Bovine), this protein is RNA demethylase ALKBH5 (ALKBH5).